A 171-amino-acid chain; its full sequence is Shikimate kinase (171 aa).

14–19 (GAGKST) serves as a coordination point for ATP. Serine 18 is a Mg(2+) binding site. The substrate site is built by aspartate 36, arginine 60, and glycine 82. An ATP-binding site is contributed by arginine 120. Arginine 139 provides a ligand contact to substrate. Glutamine 156 provides a ligand contact to ATP.

Belongs to the shikimate kinase family. As to quaternary structure, monomer. Mg(2+) serves as cofactor.

It localises to the cytoplasm. It catalyses the reaction shikimate + ATP = 3-phosphoshikimate + ADP + H(+). The protein operates within metabolic intermediate biosynthesis; chorismate biosynthesis; chorismate from D-erythrose 4-phosphate and phosphoenolpyruvate: step 5/7. Its function is as follows. Catalyzes the specific phosphorylation of the 3-hydroxyl group of shikimic acid using ATP as a cosubstrate. The sequence is that of Shikimate kinase from Shewanella frigidimarina (strain NCIMB 400).